Here is a 274-residue protein sequence, read N- to C-terminus: Large ribosomal subunit protein uL2cz/uL2cy (274 aa).

2 disordered regions span residues 1–25 (MAIH…VKSN) and 224–274 (NPVD…RRSK).

It belongs to the universal ribosomal protein uL2 family. In terms of assembly, part of the 50S ribosomal subunit.

It localises to the plastid. Its subcellular location is the chloroplast. This Aethionema cordifolium (Lebanon stonecress) protein is Large ribosomal subunit protein uL2cz/uL2cy (rpl2-A).